The sequence spans 179 residues: UPF0302 protein EF_1554 (179 aa).

The protein belongs to the UPF0302 family.

This chain is UPF0302 protein EF_1554, found in Enterococcus faecalis (strain ATCC 700802 / V583).